A 79-amino-acid polypeptide reads, in one-letter code: Scutelatoxin (79 aa).

The first 21 residues, 1-21 (MKTLLLTLVVMTIMCLDLGYT), serve as a signal peptide directing secretion. Cystine bridges form between Cys24-Cys41, Cys34-Cys59, Cys63-Cys71, and Cys72-Cys77.

It belongs to the three-finger toxin family. Short-chain subfamily. In terms of tissue distribution, expressed by the venom gland.

The protein resides in the secreted. The sequence is that of Scutelatoxin from Oxyuranus scutellatus scutellatus (Australian taipan).